Reading from the N-terminus, the 305-residue chain is Putative UDP-glucose 4-epimerase (305 aa).

NAD(+)-binding positions include 10–11 (FI), 30–35 (DNLTTG), 50–51 (DI), and 71–75 (QAAQI). The substrate site is built by S115 and Y140. NAD(+) contacts are provided by Y140 and K144. The Proton acceptor role is filled by Y140. Substrate-binding positions include N169, 183–184 (VI), 198–200 (IIF), R207, and 263–266 (REGE).

This sequence belongs to the NAD(P)-dependent epimerase/dehydratase family. NAD(+) is required as a cofactor.

It catalyses the reaction UDP-alpha-D-glucose = UDP-alpha-D-galactose. It participates in carbohydrate metabolism; galactose metabolism. Functionally, involved in the metabolism of galactose. Catalyzes the conversion of UDP-galactose (UDP-Gal) to UDP-glucose (UDP-Glc) through a mechanism involving the transient reduction of NAD. The chain is Putative UDP-glucose 4-epimerase from Methanocaldococcus jannaschii (strain ATCC 43067 / DSM 2661 / JAL-1 / JCM 10045 / NBRC 100440) (Methanococcus jannaschii).